The chain runs to 301 residues: 4-diphosphocytidyl-2-C-methyl-D-erythritol kinase (301 aa).

The active site involves Lys10. 96–106 (PMGGGVGGGSS) lines the ATP pocket. The active site involves Asp138.

The protein belongs to the GHMP kinase family. IspE subfamily.

It carries out the reaction 4-CDP-2-C-methyl-D-erythritol + ATP = 4-CDP-2-C-methyl-D-erythritol 2-phosphate + ADP + H(+). It functions in the pathway isoprenoid biosynthesis; isopentenyl diphosphate biosynthesis via DXP pathway; isopentenyl diphosphate from 1-deoxy-D-xylulose 5-phosphate: step 3/6. In terms of biological role, catalyzes the phosphorylation of the position 2 hydroxy group of 4-diphosphocytidyl-2C-methyl-D-erythritol. The sequence is that of 4-diphosphocytidyl-2-C-methyl-D-erythritol kinase from Alcanivorax borkumensis (strain ATCC 700651 / DSM 11573 / NCIMB 13689 / SK2).